The following is a 474-amino-acid chain: Melanopsin (474 aa).

Over methionine 1–threonine 72 the chain is Extracellular. N-linked (GlcNAc...) asparagine glycans are attached at residues asparagine 31 and asparagine 35. The helical transmembrane segment at leucine 73–tyrosine 93 threads the bilayer. At threonine 94–methionine 107 the chain is on the cytoplasmic side. A helical transmembrane segment spans residues leucine 108–phenylalanine 128. Residues alanine 129–lysine 144 are Extracellular-facing. An intrachain disulfide couples cysteine 143 to cysteine 221. The helical transmembrane segment at phenylalanine 145–alanine 165 threads the bilayer. Topologically, residues methionine 166–alanine 188 are cytoplasmic. The helical transmembrane segment at leucine 189 to tryptophan 209 threads the bilayer. Residues serine 210 to leucine 238 are Extracellular-facing. The helical transmembrane segment at leucine 239 to phenylalanine 259 threads the bilayer. At arginine 260 to lysine 293 the chain is on the cytoplasmic side. The helical transmembrane segment at valine 294–leucine 314 threads the bilayer. The Extracellular portion of the chain corresponds to valine 315 to arginine 355. N6-(retinylidene)lysine is present on lysine 337. Residues alanine 356–serine 372 form a helical membrane-spanning segment. Over glycine 373–methionine 474 the chain is Cytoplasmic. The disordered stretch occupies residues alanine 428–methionine 474.

Belongs to the G-protein coupled receptor 1 family. Opsin subfamily. As to expression, eye; expressed in a photosensitive subset of retinal ganglion cells (at protein level).

It is found in the cell membrane. The protein localises to the cell projection. The protein resides in the axon. Its subcellular location is the dendrite. It localises to the perikaryon. In terms of biological role, photoreceptor that binds cis-retinaldehydes. Contributes to pupillar reflex, photoentrainment and other non-image forming responses to light. May be involved in the optokinetic visual tracking response. May be involved in the regulation of retinal hyaloid vessel growth and regression. This is Melanopsin from Rattus norvegicus (Rat).